A 378-amino-acid polypeptide reads, in one-letter code: Circumsporozoite protein (378 aa).

An N-terminal signal peptide occupies residues 1–22 (MKNFNLLVVSSILLVDLFPTNC). Residues 50 to 288 (AQVRQSASRG…AGAGQGQNNE (239 aa)) form a disordered region. The span at 65–93 (NPKDEEGADKPKKKEEKKVEPKKPRENKL) shows a compositional bias: basic and acidic residues. The required for the binding to heparan sulfate proteoglycans (HSPGs) on the surface of host hepatocytes stretch occupies residues 81 to 89 (KKVEPKKPR). The tract at residues 92 to 96 (KLKQP) is region I; contains the proteolytic cleavage site. The span at 96–203 (PPAGDGAPEG…RAGGQPAAGG (108 aa)) shows a compositional bias: low complexity. Residues 97 to 102 (PAGDGA) form a 1-1; truncated repeat. Positions 97–191 (PAGDGAPEGD…AAPAGDGAPA (95 aa)) are 11 X 9 AA tandem repeats of P-[AE]-G-D-G-A-P-A-[AG]. Tandem repeats lie at residues 103-111 (PEGDGAPAA), 112-120 (PAGDGAPAA), 121-129 (PAGDGAPAA), 130-138 (PAGDGAPAA), 139-147 (PAGDGAPAA), 148-156 (PAGDGAPAA), 157-165 (PAGDGAPAA), 166-174 (PAGDGAPAA), 175-183 (PAGDGAPAA), 184-191 (PAGDGAPA), 193-208 (NRAG…QAGG), 209-224 (NRAG…QAGG), and 225-240 (NRAG…QAGG). A 6 X 16 AA approximate tandem repeats of N-R-A-G-G-Q-P-A-A-G-G-N-Q-A-G-G region spans residues 193 to 268 (NRAGGQPAAG…GAQAGGANAG (76 aa)). Over residues 228-251 (GGQPAAGGNQAGGQPAAGGNQAGA) the composition is skewed to low complexity. One copy of the 2-4; approximate; truncated repeat lies at 241–251 (QPAAGGNQAGA). Residues 252-260 (QAGGNQAGA) form a 2-5; approximate; truncated repeat. 2 stretches are compositionally biased toward gly residues: residues 252 to 266 (QAGG…GGAN) and 274 to 283 (EAGGNAGAGQ). One copy of the 2-6; approximate; truncated repeat lies at 261 to 268 (QAGGANAG). The 53-residue stretch at 304–356 (KIRSTLGVEWSPCSVTCGKGVRMRRKVSAANKKPEELDVNDLETEVCTMDKCA) folds into the TSP type-1 domain. 2 cysteine pairs are disulfide-bonded: Cys-316–Cys-350 and Cys-320–Cys-355. Thr-319 carries an O-linked (Fuc) threonine glycan. A lipid anchor (GPI-anchor amidated cysteine) is attached at Cys-355. The propeptide at 356 to 378 (AGIFNVVSNSLRLVILLVLALFN) is removed in mature form.

The protein belongs to the plasmodium circumsporozoite protein family. Post-translationally, during host cell invasion, proteolytically cleaved at the cell membrane in the region I by a papain-like cysteine protease of parasite origin. Cleavage is triggered by the sporozoite contact with highly sulfated heparan sulfate proteoglycans (HSPGs) present on the host hepatocyte cell surface. Cleavage exposes the TSP type-1 (TSR) domain and is required for productive invasion of host hepatocytes but not for adhesion to the host cell membrane. Cleavage is dispensable for sporozoite development in the oocyst, motility and for traversal of host and vector cells. O-glycosylated; maybe by POFUT2.

Its subcellular location is the cell membrane. The protein localises to the cytoplasm. Essential sporozoite protein. In the mosquito vector, required for sporozoite development in the oocyst, migration through the vector hemolymph and entry into the vector salivary glands. In the vertebrate host, required for sporozoite migration through the host dermis and infection of host hepatocytes. Binds to highly sulfated heparan sulfate proteoglycans (HSPGs) on the surface of host hepatocytes. Functionally, in the vertebrate host, binds to highly sulfated heparan sulfate proteoglycans (HSPGs) on the surface of host hepatocytes and is required for sporozoite invasion of the host hepatocytes. The sequence is that of Circumsporozoite protein from Plasmodium cynomolgi (strain Berok).